Here is a 101-residue protein sequence, read N- to C-terminus: Urease subunit beta (101 aa).

The protein belongs to the urease beta subunit family. In terms of assembly, heterotrimer of UreA (gamma), UreB (beta) and UreC (alpha) subunits. Three heterotrimers associate to form the active enzyme.

It localises to the cytoplasm. It carries out the reaction urea + 2 H2O + H(+) = hydrogencarbonate + 2 NH4(+). It functions in the pathway nitrogen metabolism; urea degradation; CO(2) and NH(3) from urea (urease route): step 1/1. The chain is Urease subunit beta from Bradyrhizobium sp. (strain ORS 278).